Reading from the N-terminus, the 1064-residue chain is Probable ATP-dependent DNA helicase CHR23 (1064 aa).

Residues 398–563 form the Helicase ATP-binding domain; it reads VSLYNNDYNG…WSLLNFLLPH (166 aa). 411 to 418 serves as a coordination point for ATP; the sequence is DEMGLGKT. The DEAH box motif lies at 513 to 516; it reads DEGH. Positions 699–866 constitute a Helicase C-terminal domain; that stretch reads LLDRLLPKLK…DRREMLEEIM (168 aa). Disordered stretches follow at residues 924-955 and 967-1064; these read AYTS…AVYS and MESE…SKRN. The segment covering 1002–1014 has biased composition (acidic residues); that stretch reads ESDEEKEEEEEER. Residues 1048–1064 are compositionally biased toward low complexity; sequence SSPNSRGKGSSKGSKRN.

This sequence belongs to the helicase family. As to expression, expressed in embryos, root apical meristem (RAM) and shoot apical meristem (SAM).

It is found in the nucleus. The catalysed reaction is ATP + H2O = ADP + phosphate + H(+). Functionally, probable chromatin-remodeling factor that is functionally redundant with CHR12 in root and shoot stem cell initiation and root apical meristem (RAM) and shoot apical meristem (SAM) maintenance. Can associate with the promoter region of WOX5. May promote seed maturation and repress initiation of germination. May repress plant growth. The polypeptide is Probable ATP-dependent DNA helicase CHR23 (Arabidopsis thaliana (Mouse-ear cress)).